A 349-amino-acid polypeptide reads, in one-letter code: Putative F-box/kelch-repeat protein At4g02310 (349 aa).

Residues 11-58 form the F-box domain; the sequence is SLFSLLPNDIVLNILARVPRWYHPILSCVSKNLRFLVSSSELKITRSL. The Kelch repeat unit spans residues 154-204; it reads KIYVFGGIDDMNKRYYEGIHAQVFDLKTQTWHVGPNLSVKLACLNRSVVTP.

This Arabidopsis thaliana (Mouse-ear cress) protein is Putative F-box/kelch-repeat protein At4g02310.